Consider the following 295-residue polypeptide: Putative aquaporin-12B (295 aa).

Topologically, residues 1–22 are cytoplasmic; the sequence is MAGLNVSLSFFFATFTLCEAAR. Residues 23 to 41 form a helical membrane-spanning segment; the sequence is RASKALLPVGAYEVFAREA. The Extracellular portion of the chain corresponds to 42–55; sequence MRTLVELGPWAGDF. Residues 56–74 traverse the membrane as a helical segment; sequence GPDLLLTLLFLLFLAHGVT. Topologically, residues 75–76 are cytoplasmic; it reads LD. The discontinuously helical intramembrane region spans 77 to 114; sequence GASANPTVSLQEFLMAEESLPGTLLKLAAQGLGMQAAC. Residues 81–83 carry the NPA 1 motif; it reads NPT. Topologically, residues 115 to 120 are cytoplasmic; sequence TLTRLC. Residues 121–142 traverse the membrane as a helical segment; the sequence is WAWELSDLHLLQSLMAQSCSSA. Topologically, residues 143-145 are extracellular; that stretch reads LRT. The chain crosses the membrane as a helical span at residues 146 to 166; the sequence is SVPHGALVEAACAFCFHLTLL. Residues 167–174 lie on the Cytoplasmic side of the membrane; that stretch reads HLRHSPPA. A helical membrane pass occupies residues 175-191; the sequence is YSGPAVALLVTVTAYTA. Residues 192 to 194 are Extracellular-facing; that stretch reads GPF. Positions 195-206 form an intramembrane region, discontinuously helical; sequence TSAFFNPALAAS. Positions 200–202 match the NPA 2 motif; it reads NPA. At 207-223 the chain is on the extracellular side; that stretch reads VTFACSGHTLLEYVQVY. Residues 224-244 form a helical membrane-spanning segment; it reads WLGPLTGMVLAVLLHQGRLPH. At 245-295 the chain is on the cytoplasmic side; that stretch reads LFQRNLFYGQKNKYRAPRGKPAPASGDTQTPAKGSSVREPGRSGVEGPHSS. Residues 257 to 295 form a disordered region; sequence KYRAPRGKPAPASGDTQTPAKGSSVREPGRSGVEGPHSS.

The protein belongs to the MIP/aquaporin (TC 1.A.8) family. AQP11/AQP12 subfamily. As to quaternary structure, homotetramer; each monomer provides an independent water pore.

Its subcellular location is the membrane. The catalysed reaction is H2O(in) = H2O(out). Putative aquaporin. Could form homotetrameric transmembrane channels, with each monomer independently mediating water transport across the plasma membrane along its osmotic gradient. The protein is Putative aquaporin-12B of Homo sapiens (Human).